Here is a 60-residue protein sequence, read N- to C-terminus: UPF0434 protein ECA2555 (60 aa).

The protein belongs to the UPF0434 family.

In Pectobacterium atrosepticum (strain SCRI 1043 / ATCC BAA-672) (Erwinia carotovora subsp. atroseptica), this protein is UPF0434 protein ECA2555.